The primary structure comprises 736 residues: Myotubularin-related protein 12 (736 aa).

Residues 182–558 (YLRSTNPEML…RQLSLPSSAF (377 aa)) enclose the Myotubularin phosphatase domain. The disordered stretch occupies residues 672 to 691 (SLATQPDHPPPLHHRLPSFG).

It belongs to the protein-tyrosine phosphatase family. Non-receptor class myotubularin subfamily. In terms of assembly, heterodimer with lipid phosphatase mtm1. In skeletal muscles, the interaction stabilizes both mtmr12 and mtm1 protein levels.

It localises to the cytoplasm. The protein localises to the sarcoplasmic reticulum. Its subcellular location is the myofibril. It is found in the sarcomere. Functionally, acts as an adapter for the myotubularin phosphatase mtm1 to regulate mtm1 protein stability and possibly its intracellular location. By stabilizing mtm1 protein levels, required for skeletal muscle maintenance but not for myogenesis. In skeletal muscle cells, does not regulate mtm1 subcellular localization. In Danio rerio (Zebrafish), this protein is Myotubularin-related protein 12 (mtmr12).